We begin with the raw amino-acid sequence, 554 residues long: Chaperonin GroEL (554 aa).

Residues 30 to 33 (TLGP), Lys51, 87 to 91 (DGTTT), Gly416, and Asp503 contribute to the ATP site.

It belongs to the chaperonin (HSP60) family. Forms a cylinder of 14 subunits composed of two heptameric rings stacked back-to-back. Interacts with the co-chaperonin GroES.

The protein localises to the cytoplasm. It catalyses the reaction ATP + H2O + a folded polypeptide = ADP + phosphate + an unfolded polypeptide.. Together with its co-chaperonin GroES, plays an essential role in assisting protein folding. The GroEL-GroES system forms a nano-cage that allows encapsulation of the non-native substrate proteins and provides a physical environment optimized to promote and accelerate protein folding. The sequence is that of Chaperonin GroEL from Holospora obtusa.